We begin with the raw amino-acid sequence, 332 residues long: Glycerol-3-phosphate dehydrogenase [NAD(P)+] (332 aa).

Positions 10, 11, 31, and 105 each coordinate NADPH. The sn-glycerol 3-phosphate site is built by lysine 105, glycine 136, and serine 138. Alanine 140 contributes to the NADPH binding site. 5 residues coordinate sn-glycerol 3-phosphate: lysine 191, aspartate 244, serine 254, arginine 255, and asparagine 256. Lysine 191 functions as the Proton acceptor in the catalytic mechanism. Arginine 255 is an NADPH binding site. Positions 279 and 281 each coordinate NADPH.

This sequence belongs to the NAD-dependent glycerol-3-phosphate dehydrogenase family.

The protein localises to the cytoplasm. The enzyme catalyses sn-glycerol 3-phosphate + NAD(+) = dihydroxyacetone phosphate + NADH + H(+). The catalysed reaction is sn-glycerol 3-phosphate + NADP(+) = dihydroxyacetone phosphate + NADPH + H(+). It functions in the pathway membrane lipid metabolism; glycerophospholipid metabolism. In terms of biological role, catalyzes the reduction of the glycolytic intermediate dihydroxyacetone phosphate (DHAP) to sn-glycerol 3-phosphate (G3P), the key precursor for phospholipid synthesis. The polypeptide is Glycerol-3-phosphate dehydrogenase [NAD(P)+] (Anaeromyxobacter dehalogenans (strain 2CP-C)).